A 420-amino-acid chain; its full sequence is Glyceraldehyde-3-phosphate dehydrogenase GAPCP2, chloroplastic (420 aa).

Residues 1-66 (MALSSLLRSA…YNAKRVQPIK (66 aa)) constitute a chloroplast transit peptide. NAD(+)-binding positions include 94 to 95 (RI), aspartate 116, and arginine 162. D-glyceraldehyde 3-phosphate contacts are provided by residues 233 to 235 (SCT), threonine 264, 293 to 294 (TG), and arginine 316. Cysteine 234 acts as the Nucleophile in catalysis. Asparagine 398 lines the NAD(+) pocket.

The protein belongs to the glyceraldehyde-3-phosphate dehydrogenase family. Homotetramer. In terms of tissue distribution, expressed in shoot and root vasculature, leaf veins and vascular tissue of flowers and siliques.

It is found in the plastid. The protein resides in the chloroplast stroma. The catalysed reaction is D-glyceraldehyde 3-phosphate + phosphate + NAD(+) = (2R)-3-phospho-glyceroyl phosphate + NADH + H(+). In terms of biological role, involved in plastidial glycolytic pathway and plays a specific role in glycolytic energy production in non-green plastids and chloroplasts. Essential for breakdown of starch to form sucrose for export to non-photosynthetic tissues, and to generate primary metabolites for anabolic pathways such as fatty acid and amino acid synthesis. Plays an important role in plant development by providing substrates for the phosphorylated pathway of serine biosynthesis in roots. Plays a crucial role in pollen development. Functionally redundant with GAPCP1. The chain is Glyceraldehyde-3-phosphate dehydrogenase GAPCP2, chloroplastic (GAPCP2) from Arabidopsis thaliana (Mouse-ear cress).